A 467-amino-acid chain; its full sequence is Light-independent protochlorophyllide reductase subunit N (467 aa).

3 residues coordinate [4Fe-4S] cluster: Cys24, Cys49, and Cys109.

Belongs to the BchN/ChlN family. In terms of assembly, protochlorophyllide reductase is composed of three subunits; ChlL, ChlN and ChlB. Forms a heterotetramer of two ChlB and two ChlN subunits. It depends on [4Fe-4S] cluster as a cofactor.

It catalyses the reaction chlorophyllide a + oxidized 2[4Fe-4S]-[ferredoxin] + 2 ADP + 2 phosphate = protochlorophyllide a + reduced 2[4Fe-4S]-[ferredoxin] + 2 ATP + 2 H2O. The protein operates within porphyrin-containing compound metabolism; chlorophyll biosynthesis (light-independent). In terms of biological role, component of the dark-operative protochlorophyllide reductase (DPOR) that uses Mg-ATP and reduced ferredoxin to reduce ring D of protochlorophyllide (Pchlide) to form chlorophyllide a (Chlide). This reaction is light-independent. The NB-protein (ChlN-ChlB) is the catalytic component of the complex. This is Light-independent protochlorophyllide reductase subunit N from Leptolyngbya boryana (Plectonema boryanum).